Consider the following 663-residue polypeptide: UvrABC system protein B (663 aa).

The region spanning 31–418 (DNIEGGEKAQ…TDTVVEQIIR (388 aa)) is the Helicase ATP-binding domain. 44–51 (GATGTGKT) is an ATP binding site. A Beta-hairpin motif is present at residues 97–120 (YYDYYQPEAYVPSSDTYIEKDSSV). One can recognise a Helicase C-terminal domain in the interval 435 to 601 (QMDDLLGEIN…TIKKEIRDLI (167 aa)). Positions 627–662 (QAEIKALQKQMQEAAELLDFELAAQIRDVILKLKAI) constitute a UVR domain.

It belongs to the UvrB family. As to quaternary structure, forms a heterotetramer with UvrA during the search for lesions. Interacts with UvrC in an incision complex.

It is found in the cytoplasm. Functionally, the UvrABC repair system catalyzes the recognition and processing of DNA lesions. A damage recognition complex composed of 2 UvrA and 2 UvrB subunits scans DNA for abnormalities. Upon binding of the UvrA(2)B(2) complex to a putative damaged site, the DNA wraps around one UvrB monomer. DNA wrap is dependent on ATP binding by UvrB and probably causes local melting of the DNA helix, facilitating insertion of UvrB beta-hairpin between the DNA strands. Then UvrB probes one DNA strand for the presence of a lesion. If a lesion is found the UvrA subunits dissociate and the UvrB-DNA preincision complex is formed. This complex is subsequently bound by UvrC and the second UvrB is released. If no lesion is found, the DNA wraps around the other UvrB subunit that will check the other stand for damage. The sequence is that of UvrABC system protein B from Streptococcus agalactiae serotype Ia (strain ATCC 27591 / A909 / CDC SS700).